The chain runs to 352 residues: MTQISERFLVQAHLDAKQPKALSPEEQAHYRAAIAAELKKQDAVMVAHYYCDPVIQALAEETGGCVADSLEMARFSNNHPASTVLVAGVRFMGETAKILNPEKRVFMPTLEATCSLDVGCPVDEFSAFCDQHPERTVVVYANTSAAVKARADWVVTSGCALEIVESLMDNGEKIIWAPDKHLGRYIQRETGADMLLWDGACIVHEEFKSKQLEDMKALYPEAAILVHPESPEAVIELADVVGSTSQMIAAAQRLPNKMFIVATDRGIFYKMQQLCPDKIFIEAPTAGNGAACRSCAHCPWMAMNTLERTLQCLREGGNEIFVEPALIPNAVRPLQRMLDFTQAARLRQAGNA.

Positions 48 and 69 each coordinate iminosuccinate. [4Fe-4S] cluster is bound at residue cysteine 114. Iminosuccinate-binding positions include 140-142 (YAN) and serine 157. Position 201 (cysteine 201) interacts with [4Fe-4S] cluster. Residues 227–229 (HPE) and threonine 244 each bind iminosuccinate. Cysteine 298 lines the [4Fe-4S] cluster pocket.

This sequence belongs to the quinolinate synthase family. Type 1 subfamily. Requires [4Fe-4S] cluster as cofactor.

It localises to the cytoplasm. It carries out the reaction iminosuccinate + dihydroxyacetone phosphate = quinolinate + phosphate + 2 H2O + H(+). It participates in cofactor biosynthesis; NAD(+) biosynthesis; quinolinate from iminoaspartate: step 1/1. Functionally, catalyzes the condensation of iminoaspartate with dihydroxyacetone phosphate to form quinolinate. The protein is Quinolinate synthase of Pseudomonas syringae pv. tomato (strain ATCC BAA-871 / DC3000).